Here is a 474-residue protein sequence, read N- to C-terminus: MTKKLHIKTWGCQMNEYDSSKMADLLDATHGYQLTDVAEEADVLLLNTCSIREKAQEKVFHQLGRWRLLKEKNPDLIIGVGGCVASQEGEHIRQRAHYVDIIFGPQTLHRLPEMINSVRGDRSPVVDISFPEIEKFDRLPEPRAEGPTAFVSIMEGCNKYCTYCVVPYTRGEEVSRPSDDILFEIAQLAAQGVREVNLLGQNVNAWRGENYDGTTGTFADLLRLVAAIDGIDRIRFTTSHPIEFTDDIIEVYRDTPELVSFLHLPVQSGSDRVLNLMGRTHTALEYKAIIRKLRAARPDIQISSDFIVGFPGETSDDFEKTMKLIADVNFDMSYSFIFSARPGTPAADMVDDVPEEEKKQRLYILQERINQQAMAWSRRMLGSTQRILVEGTSRKNIMELSGRTENNRVVNFEGTPEMIGKFVDVEITDVYPNSLRGKVVRTEDEMGLRVAETPESVIARTRKENELGVGFYQP.

In terms of domain architecture, MTTase N-terminal spans 3-120 (KKLHIKTWGC…LPEMINSVRG (118 aa)). C12, C49, C83, C157, C161, and C164 together coordinate [4Fe-4S] cluster. The Radical SAM core domain occupies 143 to 375 (RAEGPTAFVS…QERINQQAMA (233 aa)). One can recognise a TRAM domain in the interval 378–441 (RRMLGSTQRI…PNSLRGKVVR (64 aa)).

This sequence belongs to the methylthiotransferase family. MiaB subfamily. In terms of assembly, monomer. Requires [4Fe-4S] cluster as cofactor.

It localises to the cytoplasm. The enzyme catalyses N(6)-dimethylallyladenosine(37) in tRNA + (sulfur carrier)-SH + AH2 + 2 S-adenosyl-L-methionine = 2-methylsulfanyl-N(6)-dimethylallyladenosine(37) in tRNA + (sulfur carrier)-H + 5'-deoxyadenosine + L-methionine + A + S-adenosyl-L-homocysteine + 2 H(+). Functionally, catalyzes the methylthiolation of N6-(dimethylallyl)adenosine (i(6)A), leading to the formation of 2-methylthio-N6-(dimethylallyl)adenosine (ms(2)i(6)A) at position 37 in tRNAs that read codons beginning with uridine. This chain is tRNA-2-methylthio-N(6)-dimethylallyladenosine synthase, found in Salmonella arizonae (strain ATCC BAA-731 / CDC346-86 / RSK2980).